The primary structure comprises 214 residues: Hypoxanthine-guanine phosphoribosyltransferase (214 aa).

N-acetylalanine is present on A2. Position 69 (K69) interacts with GMP. At K103 the chain carries N6-acetyllysine. K115 participates in a covalent cross-link: Glycyl lysine isopeptide (Lys-Gly) (interchain with G-Cter in SUMO1); alternate. Residue K115 forms a Glycyl lysine isopeptide (Lys-Gly) (interchain with G-Cter in SUMO2); alternate linkage. GMP is bound by residues 134–142 (EDIIDTGKT), K166, 186–188 (KFV), and D194. D138 functions as the Proton acceptor in the catalytic mechanism. The residue at position 142 (T142) is a Phosphothreonine. Position 194 (D194) interacts with Mg(2+).

The protein belongs to the purine/pyrimidine phosphoribosyltransferase family. As to quaternary structure, homotetramer. It depends on Mg(2+) as a cofactor.

It is found in the cytoplasm. It carries out the reaction IMP + diphosphate = hypoxanthine + 5-phospho-alpha-D-ribose 1-diphosphate. The enzyme catalyses GMP + diphosphate = guanine + 5-phospho-alpha-D-ribose 1-diphosphate. The protein operates within purine metabolism; IMP biosynthesis via salvage pathway; IMP from hypoxanthine: step 1/1. Converts guanine to guanosine monophosphate, and hypoxanthine to inosine monophosphate. Transfers the 5-phosphoribosyl group from 5-phosphoribosylpyrophosphate onto the purine. Plays a central role in the generation of purine nucleotides through the purine salvage pathway. The chain is Hypoxanthine-guanine phosphoribosyltransferase (Hprt1) from Mus spretus (Western Mediterranean mouse).